A 302-amino-acid chain; its full sequence is MFWFKNVMIYRLTSPLSLESHSLEDQLQQTKFTPCSQSDMSKFGWSSPLSGSELLHFSQSKQFLLVSHKEDKLLPANVIKKETEERIAVLEEKEARKLKKTEKQAIKDDVVAMLLPRAFSKHQFTAIWLDLDAQLVYVDAGSSKRAEDTLALLRKTLGSLPVVPISFALLPSEVMTNWIAKGHTPNWLNLLEEAELKSFDTDSVVRCKRQDLESEEIAQHLQASKFVTKLAIDWENHFSCVLNEDATLSRVKFADEVREKNDDILKEDIAQRFDADLLLMTEELKLFTQKMIEEFGGIKERI.

It belongs to the RdgC family.

The protein localises to the cytoplasm. It is found in the nucleoid. May be involved in recombination. The protein is Recombination-associated protein RdgC of Actinobacillus pleuropneumoniae serotype 5b (strain L20).